A 287-amino-acid polypeptide reads, in one-letter code: Shikimate dehydrogenase (NADP(+)) (287 aa).

Shikimate is bound by residues 20-22 (SRS) and Thr-67. The Proton acceptor role is filled by Lys-71. Residue Glu-84 coordinates NADP(+). 2 residues coordinate shikimate: Asn-93 and Asp-108. Residues 132-136 (GAGGA), 156-161 (NRTAAR), and Met-226 each bind NADP(+). Residue Tyr-228 coordinates shikimate. Residue Gly-250 participates in NADP(+) binding.

It belongs to the shikimate dehydrogenase family. As to quaternary structure, homodimer.

The catalysed reaction is shikimate + NADP(+) = 3-dehydroshikimate + NADPH + H(+). It functions in the pathway metabolic intermediate biosynthesis; chorismate biosynthesis; chorismate from D-erythrose 4-phosphate and phosphoenolpyruvate: step 4/7. In terms of biological role, involved in the biosynthesis of the chorismate, which leads to the biosynthesis of aromatic amino acids. Catalyzes the reversible NADPH linked reduction of 3-dehydroshikimate (DHSA) to yield shikimate (SA). The polypeptide is Shikimate dehydrogenase (NADP(+)) (Bordetella parapertussis (strain 12822 / ATCC BAA-587 / NCTC 13253)).